Here is a 284-residue protein sequence, read N- to C-terminus: 4-hydroxybenzoate octaprenyltransferase (284 aa).

Helical transmembrane passes span 19-39 (IGSL…AQGL), 42-62 (LRVL…GCVI), 93-113 (LLLF…MNTL), 114-134 (TIQL…MKRF), 136-156 (HLPQ…AWAA), 158-178 (ANTL…WTIA), 210-230 (IIGL…QGLA), 233-253 (TSYY…QHLI), and 264-284 (AFLN…LSVW).

It belongs to the UbiA prenyltransferase family. Mg(2+) is required as a cofactor.

It localises to the cell inner membrane. The enzyme catalyses all-trans-octaprenyl diphosphate + 4-hydroxybenzoate = 4-hydroxy-3-(all-trans-octaprenyl)benzoate + diphosphate. The protein operates within cofactor biosynthesis; ubiquinone biosynthesis. Catalyzes the prenylation of para-hydroxybenzoate (PHB) with an all-trans polyprenyl group. Mediates the second step in the final reaction sequence of ubiquinone-8 (UQ-8) biosynthesis, which is the condensation of the polyisoprenoid side chain with PHB, generating the first membrane-bound Q intermediate 3-octaprenyl-4-hydroxybenzoate. The sequence is that of 4-hydroxybenzoate octaprenyltransferase from Vibrio cholerae serotype O1 (strain ATCC 39541 / Classical Ogawa 395 / O395).